The primary structure comprises 1290 residues: Period circadian protein homolog 1 (1290 aa).

The disordered stretch occupies residues 1–134; that stretch reads MSGPLEGADG…SSEQSARART (134 aa). Residues 1-151 form an interaction with BTRC region; the sequence is MSGPLEGADG…LRELKLRLPP (151 aa). The segment covering 25–38 has biased composition (pro residues); that stretch reads VPSPGPPQHRPCPG. Composition is skewed to low complexity over residues 48-57 and 64-115; these read NSNGSSGNES and GASQ…ASSE. Residues 116 to 132 show a composition bias toward polar residues; sequence QDNPSTSGCSSEQSARA. Phosphothreonine; by CSNK1E is present on T121. Phosphoserine; by CSNK1E is present on residues S122 and S126. The short motif at 138 to 147 is the Nuclear export signal 1 element; it reads LMTALRELKL. 2 consecutive PAS domains span residues 208–275 and 348–414; these read ITSE…PSRL and YEAP…KILQ. Residues 422–465 form the PAC domain; the sequence is HSPIRFCARNGEYVTMDTSWAGFVHPWSRKVAFVLGRHKVRTAP. The short motif at 489–498 is the Nuclear export signal 2 element; sequence LSEQIHRLLL. 2 disordered regions span residues 508-544 and 646-698; these read GLCG…PAPV and TTKR…KEPV. 2 stretches are compositionally biased toward low complexity: residues 517 to 533 and 652 to 662; these read SPGP…SNGG and ASSSSYTTSSA. A required for phosphorylation by CSNK1E region spans residues 596–815; the sequence is ELEAGSAPVQ…GLDSSSTAPS (220 aa). Phosphoserine is present on residues S661, S663, and S704. Disordered stretches follow at residues 749 to 772, 805 to 874, and 938 to 977; these read GLAP…APDA, RGLD…PPAT, and ALQT…FNSR. Pro residues predominate over residues 751–769; that stretch reads APGPAPSPAPSPTVAPDPA. The residue at position 815 (S815) is a Phosphoserine. Positions 827-843 match the Nuclear localization signal motif; sequence APPSRRHHCRSKAKRSR. The segment covering 830 to 847 has biased composition (basic residues); sequence SRRHHCRSKAKRSRHHQN. Pro residues predominate over residues 860-874; that stretch reads SPVPPSTPWPTPPAT. Residues 950 to 961 show a composition bias toward low complexity; it reads ASHSPSPSLPAL. Residues S979 and S980 each carry the phosphoserine modification. The short motif at 982–989 is the Nuclear export signal 3 element; sequence LQLNLLQL. A disordered region spans residues 996-1037; the sequence is EGAAVAGGPGSSAGPPPPSAEAAEPEARLAEVTESSNQDALS. The LXXLL signature appears at 1043-1047; the sequence is LELLL. Residues 1051–1062 are compositionally biased toward low complexity; sequence SRSGTGSAASGS. Disordered stretches follow at residues 1051–1098 and 1207–1290; these read SRSG…SKYF and SSTQ…NCTS. Positions 1063 to 1077 are enriched in gly residues; the sequence is LGSGLGSGSGSGSHE. Low complexity predominate over residues 1078–1095; that stretch reads GGSTSASITRSSQSSHTS. Positions 1149–1290 are CRY binding domain; that stretch reads SRDMTSVLKQ…ALPTAGNCTS (142 aa). Over residues 1236–1248 the composition is skewed to gly residues; that stretch reads GEQGSSGGGSGEG.

Homodimer. Component of the circadian core oscillator, which includes the CRY proteins, CLOCK or NPAS2, BMAL1 or BMAL2, CSNK1D and/or CSNK1E, TIMELESS, and the PER proteins. Interacts directly with TIMELESS, PER2, PER3, CRY1 and CRY2. Interacts with BMAL1 and CLOCK. Interacts with GPRASP1. Interacts (phosphorylated) with BTRC and FBXW11; the interactions trigger proteasomal degradation. Interacts with NONO, WDR5 and SFPQ. Interacts with USP2. Interacts with HNF4A. Post-translationally, phosphorylated on serine residues by CSNK1D, CSNK1E and probably also by CSNK1G2. Phosphorylation by CSNK1D or CSNK1E promotes nuclear location of PER proteins as well as ubiquitination and subsequent degradation. May be dephosphorylated by PP1. In terms of processing, ubiquitinated; requires phosphorylation by CSNK1E and interaction with BTRC and FBXW11. Deubiquitinated by USP2. As to expression, widely expressed. Expressed in hair follicles (at protein level). Found in heart, brain, placenta, lung, liver, skeletal muscle, pancreas, kidney, spleen, thymus, prostate, testis, ovary and small intestine. Highest level in skeletal muscle.

It is found in the nucleus. It localises to the cytoplasm. In terms of biological role, transcriptional repressor which forms a core component of the circadian clock. The circadian clock, an internal time-keeping system, regulates various physiological processes through the generation of approximately 24 hour circadian rhythms in gene expression, which are translated into rhythms in metabolism and behavior. It is derived from the Latin roots 'circa' (about) and 'diem' (day) and acts as an important regulator of a wide array of physiological functions including metabolism, sleep, body temperature, blood pressure, endocrine, immune, cardiovascular, and renal function. Consists of two major components: the central clock, residing in the suprachiasmatic nucleus (SCN) of the brain, and the peripheral clocks that are present in nearly every tissue and organ system. Both the central and peripheral clocks can be reset by environmental cues, also known as Zeitgebers (German for 'timegivers'). The predominant Zeitgeber for the central clock is light, which is sensed by retina and signals directly to the SCN. The central clock entrains the peripheral clocks through neuronal and hormonal signals, body temperature and feeding-related cues, aligning all clocks with the external light/dark cycle. Circadian rhythms allow an organism to achieve temporal homeostasis with its environment at the molecular level by regulating gene expression to create a peak of protein expression once every 24 hours to control when a particular physiological process is most active with respect to the solar day. Transcription and translation of core clock components (CLOCK, NPAS2, BMAL1, BMAL2, PER1, PER2, PER3, CRY1 and CRY2) plays a critical role in rhythm generation, whereas delays imposed by post-translational modifications (PTMs) are important for determining the period (tau) of the rhythms (tau refers to the period of a rhythm and is the length, in time, of one complete cycle). A diurnal rhythm is synchronized with the day/night cycle, while the ultradian and infradian rhythms have a period shorter and longer than 24 hours, respectively. Disruptions in the circadian rhythms contribute to the pathology of cardiovascular diseases, cancer, metabolic syndromes and aging. A transcription/translation feedback loop (TTFL) forms the core of the molecular circadian clock mechanism. Transcription factors, CLOCK or NPAS2 and BMAL1 or BMAL2, form the positive limb of the feedback loop, act in the form of a heterodimer and activate the transcription of core clock genes and clock-controlled genes (involved in key metabolic processes), harboring E-box elements (5'-CACGTG-3') within their promoters. The core clock genes: PER1/2/3 and CRY1/2 which are transcriptional repressors form the negative limb of the feedback loop and interact with the CLOCK|NPAS2-BMAL1|BMAL2 heterodimer inhibiting its activity and thereby negatively regulating their own expression. This heterodimer also activates nuclear receptors NR1D1/2 and RORA/B/G, which form a second feedback loop and which activate and repress BMAL1 transcription, respectively. Regulates circadian target genes expression at post-transcriptional levels, but may not be required for the repression at transcriptional level. Controls PER2 protein decay. Represses CRY2 preventing its repression on CLOCK/BMAL1 target genes such as FXYD5 and SCNN1A in kidney and PPARA in liver. Besides its involvement in the maintenance of the circadian clock, has an important function in the regulation of several processes. Participates in the repression of glucocorticoid receptor NR3C1/GR-induced transcriptional activity by reducing the association of NR3C1/GR to glucocorticoid response elements (GREs) by BMAL1:CLOCK. Plays a role in the modulation of the neuroinflammatory state via the regulation of inflammatory mediators release, such as CCL2 and IL6. In spinal astrocytes, negatively regulates the MAPK14/p38 and MAPK8/JNK MAPK cascades as well as the subsequent activation of NFkappaB. Coordinately regulates the expression of multiple genes that are involved in the regulation of renal sodium reabsorption. Can act as gene expression activator in a gene and tissue specific manner, in kidney enhances WNK1 and SLC12A3 expression in collaboration with CLOCK. Modulates hair follicle cycling. Represses the CLOCK-BMAL1 induced transcription of BHLHE40/DEC1. This is Period circadian protein homolog 1 (PER1) from Homo sapiens (Human).